Reading from the N-terminus, the 289-residue chain is MSNQNSKKHLGHTARKRFGQNFLHDMNVIHNIVSAINPKNGQFLLEIGPGLGALTEPVAEQVDKLTVVELDRDLAERLRHHPFLNHKLTIIEQDALRFNFREYFESLELREGEGVRVFGNLPYNISTPLMFHLFKFHDLIQDMHFMLQKEVVKRLCAAPNSKAYGRLTIMAQYYCQVMPVLEVPPTAFKPAPKVDSAVVRLMPHKVLPHPVKDVYWLNRVTTQAFNQRRKTLRNALSTLFSPEQLEALNIDLNARAENLSIADYARLANWLYDNPPAVDNQEEIIDEDI.

S-adenosyl-L-methionine is bound by residues N21, L23, G48, E69, D94, and N120.

This sequence belongs to the class I-like SAM-binding methyltransferase superfamily. rRNA adenine N(6)-methyltransferase family. RsmA subfamily.

The protein localises to the cytoplasm. It carries out the reaction adenosine(1518)/adenosine(1519) in 16S rRNA + 4 S-adenosyl-L-methionine = N(6)-dimethyladenosine(1518)/N(6)-dimethyladenosine(1519) in 16S rRNA + 4 S-adenosyl-L-homocysteine + 4 H(+). Its function is as follows. Specifically dimethylates two adjacent adenosines (A1518 and A1519) in the loop of a conserved hairpin near the 3'-end of 16S rRNA in the 30S particle. May play a critical role in biogenesis of 30S subunits. This Actinobacillus pleuropneumoniae serotype 5b (strain L20) protein is Ribosomal RNA small subunit methyltransferase A.